Consider the following 112-residue polypeptide: Protein 4.2 (112 aa).

Residues 64 to 93 (KPDGLNHQVTQGKKSHTQSQQTGPTTLTSD) are disordered. The span at 70 to 92 (HQVTQGKKSHTQSQQTGPTTLTS) shows a compositional bias: polar residues.

This Escherichia phage T7 (Bacteriophage T7) protein is Protein 4.2.